The following is a 550-amino-acid chain: MSSARPVRAARGTTLTARSWSTEAPLRMLQNNLDPEVAERPDDLVVYGGTGKAARNWASFDAIVRELTTLSDDETLLVQSGKPVGVLRTHEWAPRVLLANSNLVGDWANWPEFRRLDALGLMMYGQMTAGSWIYIGTQGILQGTYETFAAVAERRFGGTLAGTLTITAGLGGMGGAQPLAVTMNEGVALVVECDPERAHRRVKHGYLDEVADGLDQAIEKAEAAKAQRRAYSVAVIGNAAEVLPELLRRGVRADIVTDQTSAHDPLSYLPLGVELEDWEDYASKKPEEFTDRARDSMAKHVEAMVGFMDAGAEVFDYGNSLRGEAQLAGYGRAFDYPGFVPAYIRPLFCEGKGPFRWAALSGDPADIAATDRAILDLFGDDDHLARWIRLAGEKVSFQGLPARICWLGYGERHLAGLRFNEMVASGELKAPLVLGRDHLDCGSVASPYRETEGMADGSDAIADWPLLNALVNTASGATWVSLHHGGGVGMGRSLHAGQVTVADGTALAAQKLERVLTNDPGMGVIRHVDAGYDRAREVATERGVRVPGLA.

Residues 48–49 (GG), Gln-126, 172–174 (GMG), Glu-192, Arg-197, 238–239 (NA), 259–263 (QTSAH), 268–269 (YL), and Tyr-317 contribute to the NAD(+) site. Cys-405 is a catalytic residue. Gly-487 provides a ligand contact to NAD(+).

It belongs to the urocanase family. Requires NAD(+) as cofactor.

The protein resides in the cytoplasm. It catalyses the reaction 4-imidazolone-5-propanoate = trans-urocanate + H2O. It functions in the pathway amino-acid degradation; L-histidine degradation into L-glutamate; N-formimidoyl-L-glutamate from L-histidine: step 2/3. Its function is as follows. Catalyzes the conversion of urocanate to 4-imidazolone-5-propionate. The chain is Urocanate hydratase from Saccharopolyspora erythraea (strain ATCC 11635 / DSM 40517 / JCM 4748 / NBRC 13426 / NCIMB 8594 / NRRL 2338).